Here is a 177-residue protein sequence, read N- to C-terminus: SsrA-binding protein (177 aa).

2 disordered regions span residues M1–K23 and Y148–E177. Over residues Y148–R165 the composition is skewed to basic and acidic residues.

The protein belongs to the SmpB family.

The protein resides in the cytoplasm. In terms of biological role, required for rescue of stalled ribosomes mediated by trans-translation. Binds to transfer-messenger RNA (tmRNA), required for stable association of tmRNA with ribosomes. tmRNA and SmpB together mimic tRNA shape, replacing the anticodon stem-loop with SmpB. tmRNA is encoded by the ssrA gene; the 2 termini fold to resemble tRNA(Ala) and it encodes a 'tag peptide', a short internal open reading frame. During trans-translation Ala-aminoacylated tmRNA acts like a tRNA, entering the A-site of stalled ribosomes, displacing the stalled mRNA. The ribosome then switches to translate the ORF on the tmRNA; the nascent peptide is terminated with the 'tag peptide' encoded by the tmRNA and targeted for degradation. The ribosome is freed to recommence translation, which seems to be the essential function of trans-translation. The sequence is that of SsrA-binding protein from Streptomyces avermitilis (strain ATCC 31267 / DSM 46492 / JCM 5070 / NBRC 14893 / NCIMB 12804 / NRRL 8165 / MA-4680).